A 460-amino-acid chain; its full sequence is Anthocyanidin 3-O-glucoside 5-O-glucosyltransferase 1 (460 aa).

Positions 1–22 are cleaved as a signal peptide; it reads MVRRRVLLATFPAQGHINPALQ. The active-site Proton acceptor is H16. H16 contacts an anthocyanidin. UDP-alpha-D-glucose is bound by residues Q338, H353, W356, N357, S358, E361, D377, and Q378.

It belongs to the UDP-glycosyltransferase family.

The enzyme catalyses an anthocyanidin 3-O-beta-D-glucoside + UDP-alpha-D-glucose = an anthocyanidin 3,5-di-O-beta-D-glucoside + UDP + 2 H(+). Its pathway is pigment biosynthesis; anthocyanin biosynthesis. In terms of biological role, catalyzes the glucosylation at the O-5 position of anthocyanidin 3-glucosides to form anthocyanidin 3,5-di-O-glucosides using UDP-glucose as sugar donor. Anthocyanidin 3,5-di-O-glucosides are molecules that are responsible for pigmentation. Also acts on anthocyanidin 3-O-(6-O-malonylglucoside). Much less active with hydroxycinnamoylglucose derivatives. No activity in the absence of the 3-O-glucoside group. In Perilla frutescens (Beefsteak mint), this protein is Anthocyanidin 3-O-glucoside 5-O-glucosyltransferase 1 (PF3R4).